The following is a 311-amino-acid chain: tRNA-cytidine(32) 2-sulfurtransferase (311 aa).

The PP-loop motif motif lies at 45–50 (SGGKDS). The [4Fe-4S] cluster site is built by cysteine 120, cysteine 123, and cysteine 211.

It belongs to the TtcA family. As to quaternary structure, homodimer. Requires Mg(2+) as cofactor. [4Fe-4S] cluster serves as cofactor.

The protein localises to the cytoplasm. The catalysed reaction is cytidine(32) in tRNA + S-sulfanyl-L-cysteinyl-[cysteine desulfurase] + AH2 + ATP = 2-thiocytidine(32) in tRNA + L-cysteinyl-[cysteine desulfurase] + A + AMP + diphosphate + H(+). It functions in the pathway tRNA modification. In terms of biological role, catalyzes the ATP-dependent 2-thiolation of cytidine in position 32 of tRNA, to form 2-thiocytidine (s(2)C32). The sulfur atoms are provided by the cysteine/cysteine desulfurase (IscS) system. The chain is tRNA-cytidine(32) 2-sulfurtransferase from Shewanella halifaxensis (strain HAW-EB4).